The sequence spans 508 residues: Light-independent protochlorophyllide reductase subunit B (508 aa).

[4Fe-4S] cluster is bound at residue aspartate 36. Catalysis depends on aspartate 294, which acts as the Proton donor. 429–430 lines the substrate pocket; sequence GM.

This sequence belongs to the ChlB/BchB/BchZ family. As to quaternary structure, protochlorophyllide reductase is composed of three subunits; ChlL, ChlN and ChlB. Forms a heterotetramer of two ChlB and two ChlN subunits. Requires [4Fe-4S] cluster as cofactor.

It carries out the reaction chlorophyllide a + oxidized 2[4Fe-4S]-[ferredoxin] + 2 ADP + 2 phosphate = protochlorophyllide a + reduced 2[4Fe-4S]-[ferredoxin] + 2 ATP + 2 H2O. It functions in the pathway porphyrin-containing compound metabolism; chlorophyll biosynthesis (light-independent). Its function is as follows. Component of the dark-operative protochlorophyllide reductase (DPOR) that uses Mg-ATP and reduced ferredoxin to reduce ring D of protochlorophyllide (Pchlide) to form chlorophyllide a (Chlide). This reaction is light-independent. The NB-protein (ChlN-ChlB) is the catalytic component of the complex. This is Light-independent protochlorophyllide reductase subunit B from Nostoc punctiforme (strain ATCC 29133 / PCC 73102).